The sequence spans 94 residues: Integration host factor subunit beta (94 aa).

Belongs to the bacterial histone-like protein family. In terms of assembly, heterodimer of an alpha and a beta chain.

In terms of biological role, this protein is one of the two subunits of integration host factor, a specific DNA-binding protein that functions in genetic recombination as well as in transcriptional and translational control. In Vibrio atlanticus (strain LGP32) (Vibrio splendidus (strain Mel32)), this protein is Integration host factor subunit beta.